Reading from the N-terminus, the 1110-residue chain is Ribosome assembly protein 1 (1110 aa).

One can recognise a tr-type G domain in the interval 17–262; that stretch reads SCIRNICIVA…QKLGAKRENL (246 aa). GTP-binding positions include 26–33, 102–106, and 156–159; these read AHVDHGKT, DSPGH, and NKID. Residue S431 is modified to Phosphoserine.

The protein belongs to the TRAFAC class translation factor GTPase superfamily. Classic translation factor GTPase family.

The protein localises to the cytoplasm. The catalysed reaction is GTP + H2O = GDP + phosphate + H(+). With respect to regulation, GTPase activity is stimulated in the presence of 60S subunits. Its function is as follows. GTPase involved in the biogenesis of the 60S ribosomal subunit and translational activation of ribosomes. Together with SDO1, may trigger the GTP-dependent release of TIF6 from 60S pre-ribosomes in the cytoplasm, thereby activating ribosomes for translation competence by allowing 80S ribosome assembly and facilitating TIF6 recycling to the nucleus, where it is required for 60S rRNA processing and nuclear export. Inhibits GTPase activity of ribosome-bound EF-2. This Saccharomyces cerevisiae (strain ATCC 204508 / S288c) (Baker's yeast) protein is Ribosome assembly protein 1 (RIA1).